Consider the following 361-residue polypeptide: Probable purine permease 5 (361 aa).

Helical transmembrane passes span 37 to 57 (WILL…SSLL), 70 to 90 (WIIS…LLPT), 105 to 125 (LVLS…MYAY), 134 to 154 (TSSL…YLIV), 158 to 178 (LNAS…IIAL), 193 to 213 (YFAG…IFAL), 235 to 255 (VMVS…SNDF), 285 to 305 (LGVL…AGVL), and 315 to 335 (VAAV…SLVL). Positions 75 to 178 (VAVAGWPITC…ITGAMAIIAL (104 aa)) constitute an EamA domain.

The protein belongs to the purine permeases (TC 2.A.7.14) family.

It localises to the membrane. The sequence is that of Probable purine permease 5 (PUP5) from Arabidopsis thaliana (Mouse-ear cress).